Here is an 82-residue protein sequence, read N- to C-terminus: Small ribosomal subunit protein bS16 (82 aa).

The protein belongs to the bacterial ribosomal protein bS16 family.

This Proteus mirabilis (strain HI4320) protein is Small ribosomal subunit protein bS16.